A 41-amino-acid chain; its full sequence is Large ribosomal subunit protein bL36 (41 aa).

This sequence belongs to the bacterial ribosomal protein bL36 family.

In Stenotrophomonas maltophilia (strain R551-3), this protein is Large ribosomal subunit protein bL36.